The chain runs to 273 residues: Putative pyruvate, phosphate dikinase regulatory protein (273 aa).

Residue 153 to 160 coordinates ADP; the sequence is GVSRTSKS.

Belongs to the pyruvate, phosphate/water dikinase regulatory protein family. PDRP subfamily.

It carries out the reaction N(tele)-phospho-L-histidyl/L-threonyl-[pyruvate, phosphate dikinase] + ADP = N(tele)-phospho-L-histidyl/O-phospho-L-threonyl-[pyruvate, phosphate dikinase] + AMP + H(+). The catalysed reaction is N(tele)-phospho-L-histidyl/O-phospho-L-threonyl-[pyruvate, phosphate dikinase] + phosphate + H(+) = N(tele)-phospho-L-histidyl/L-threonyl-[pyruvate, phosphate dikinase] + diphosphate. Its function is as follows. Bifunctional serine/threonine kinase and phosphorylase involved in the regulation of the pyruvate, phosphate dikinase (PPDK) by catalyzing its phosphorylation/dephosphorylation. The polypeptide is Putative pyruvate, phosphate dikinase regulatory protein (Ehrlichia canis (strain Jake)).